We begin with the raw amino-acid sequence, 119 residues long: Putative F420H(2)-dependent quinone reductase Rv3178 (119 aa).

Residues 21–23 (RKS), 27–32 (FVAPLL), 43–46 (VASA), and 54–58 (QWYRN) each bind coenzyme F420-(gamma-Glu)n.

The protein belongs to the F420H(2)-dependent quinone reductase family.

It is found in the cell membrane. The enzyme catalyses oxidized coenzyme F420-(gamma-L-Glu)(n) + a quinol + H(+) = reduced coenzyme F420-(gamma-L-Glu)(n) + a quinone. Functionally, involved in a F420-dependent anti-oxidant mechanism that protects M.tuberculosis against oxidative stress and bactericidal agents. Catalyzes the F420H(2)-dependent two-electron reduction of quinones to dihydroquinones, thereby preventing the formation of cytotoxic semiquinones obtained by the one-electron reduction pathway. Since menaquinone is the sole quinone electron carrier in the respiratory chain in M.tuberculosis, the physiological electron acceptor for Fqr-mediated F420H(2) oxidation is therefore likely to be the endogenous menaquinone found in the membrane fraction of M.tuberculosis. This is Putative F420H(2)-dependent quinone reductase Rv3178 from Mycobacterium tuberculosis (strain ATCC 25618 / H37Rv).